The chain runs to 506 residues: Pleckstrin homology domain-containing family D member 1 (506 aa).

Residues 28–136 form the PH domain; it reads KVQLYGVLWK…WLEMLQESGK (109 aa). A coiled-coil region spans residues 146 to 391; that stretch reads EAMIKSLEAQ…KVRNKEKEER (246 aa). Arg503 is subject to Omega-N-methylarginine.

The protein belongs to the PLEKHD1 family.

The sequence is that of Pleckstrin homology domain-containing family D member 1 (PLEKHD1) from Homo sapiens (Human).